The sequence spans 492 residues: Endoglycoceramidase I (492 aa).

The signal sequence occupies residues 1 to 14 (MRKTVVAFAAAIAA). Cys-15 carries the N-palmitoyl cysteine lipid modification. Cys-15 carries the S-diacylglycerol cysteine lipid modification. Residues Lys-61, Asp-62, 131–133 (HQD), and 213–214 (NE) contribute to the substrate site. The active-site Proton donor is Glu-214. A disulfide bridge links Cys-224 with Cys-229. Substrate is bound by residues Asn-265, Gln-298, and Tyr-302. A disulfide bridge links Cys-294 with Cys-313. Residue Glu-339 is the Nucleophile of the active site. Trp-365 lines the substrate pocket. Positions 467–492 (NRPGSAGAEVPDGPIETSSSGSSGSS) are disordered.

It belongs to the glycosyl hydrolase 5 (cellulase A) family.

The protein resides in the secreted. It is found in the membrane. The enzyme catalyses an oligoglycosyl-(1-&gt;4)-beta-D-glucosyl-(1&lt;-&gt;1)-ceramide + H2O = an oligoglycosyl-(1-&gt;4)-D-glucose + an N-acyl-sphingoid base. It carries out the reaction a ganglioside GM3 + H2O = N-acetyl-alpha-neuraminosyl-(2-&gt;3)-beta-D-galactosyl-(1-&gt;4)-D-glucose + an N-acyl-sphingoid base. The catalysed reaction is a ganglioside GM1 + H2O = beta-D-Gal-(1-&gt;3)-beta-D-GalNAc-(1-&gt;4)-[alpha-Neu5Ac-(2-&gt;3)]-beta-D-Gal-(1-&gt;4)-D-Glc + an N-acyl-sphingoid base. It catalyses the reaction a ganglioside Fuc-GM1 + H2O = alpha-Fuc-(1-&gt;2)-beta-Gal-(1-&gt;3)-beta-GalNAc-(1-&gt;4)-[alpha-Neu5Ac-(2-&gt;3)]-beta-Gal-(1-&gt;4)-Glc + an N-acyl-sphingoid base. The enzyme catalyses a beta-D-galactosyl-(1-&gt;4)-beta-D-glucosyl-(1&lt;-&gt;1)-ceramide + H2O = lactose + an N-acyl-sphingoid base. Functionally, hydrolyzes glycosphingolipids; exhibits broad substrate specificity including monosialodihexosylganglioside (GM3), monosialotetrahexosylganglioside (GM1), fucosyl-GM1, lactosylceramide, globotriosylceramide, globotetraosylceramide, ganglioside GD1a, and ganglioside GD1b. No activity towards glucosylceramide and galactosylceramide. The sequence is that of Endoglycoceramidase I from Rhodococcus hoagii (strain 103S) (Rhodococcus equi).